Consider the following 197-residue polypeptide: Phosphoheptose isomerase (197 aa).

Residues 37-197 (MLQCLMNDGK…CIDSVLLEGM (161 aa)) form the SIS domain. 52–54 (NGG) contributes to the substrate binding site. The Zn(2+) site is built by histidine 61 and glutamate 65. Residues glutamate 65, 94 to 95 (ND), 120 to 122 (STS), serine 125, and glutamine 175 contribute to the substrate site. Residues glutamine 175 and histidine 183 each coordinate Zn(2+).

This sequence belongs to the SIS family. GmhA subfamily. Homotetramer. Zn(2+) is required as a cofactor.

It localises to the cytoplasm. The enzyme catalyses 2 D-sedoheptulose 7-phosphate = D-glycero-alpha-D-manno-heptose 7-phosphate + D-glycero-beta-D-manno-heptose 7-phosphate. It participates in carbohydrate biosynthesis; D-glycero-D-manno-heptose 7-phosphate biosynthesis; D-glycero-alpha-D-manno-heptose 7-phosphate and D-glycero-beta-D-manno-heptose 7-phosphate from sedoheptulose 7-phosphate: step 1/1. Its function is as follows. Catalyzes the isomerization of sedoheptulose 7-phosphate in D-glycero-D-manno-heptose 7-phosphate. This Neisseria meningitidis serogroup C (strain 053442) protein is Phosphoheptose isomerase.